Consider the following 464-residue polypeptide: L-cystine uptake protein TcyP (464 aa).

Transmembrane regions (helical) follow at residues 3–23 (TLLV…LYYM), 34–54 (VFTA…IYEP), 73–93 (YVKL…ISAF), 107–127 (GLII…GIAA), 184–204 (PTST…FIGV), 225–245 (IVMR…LALM), 263–283 (FVLA…LLIA), 347–367 (AGIY…IDPL), 371–391 (FILT…GVGG), and 395–415 (FAAL…ALVI).

The protein belongs to the dicarboxylate/amino acid:cation symporter (DAACS) (TC 2.A.23) family.

The protein resides in the membrane. In terms of biological role, mediates uptake of L-cystine, the oxidized form of L-cysteine. The chain is L-cystine uptake protein TcyP from Bacillus thuringiensis subsp. konkukian (strain 97-27).